Consider the following 219-residue polypeptide: Large ribosomal subunit protein uL16 (219 aa).

Belongs to the universal ribosomal protein uL16 family. In terms of assembly, component of the large ribosomal subunit. Mature ribosomes consist of a small (40S) and a large (60S) subunit. The 40S subunit contains about 33 different proteins and 1 molecule of RNA (18S). The 60S subunit contains about 49 different proteins and 3 molecules of RNA (28S, 5.8S and 5S).

In Bombyx mandarina (Wild silk moth), this protein is Large ribosomal subunit protein uL16 (RpL10).